We begin with the raw amino-acid sequence, 160 residues long: Large ribosomal subunit protein uL15 (160 aa).

The segment covering 1 to 13 has biased composition (basic and acidic residues); that stretch reads MKLNELRDNEGAA. Residues 1–51 form a disordered region; that stretch reads MKLNELRDNEGAARKKKRVARGPGSGKGKTAGRGIKGQKSRSGVALNGYEG. Gly residues predominate over residues 23-35; that stretch reads PGSGKGKTAGRGI.

The protein belongs to the universal ribosomal protein uL15 family. Part of the 50S ribosomal subunit.

Binds to the 23S rRNA. This chain is Large ribosomal subunit protein uL15, found in Cereibacter sphaeroides (strain ATCC 17025 / ATH 2.4.3) (Rhodobacter sphaeroides).